The following is a 104-amino-acid chain: MTNRLVLSGTVCRAPLRKVSPSGIPHCQFVLEHRSVQEEAGFHRQAWCQMPVIVSGHENQAITHSITVGSRITVQGFISCHKAKNGLSKMVLHAEQIELIDSGD.

The 100-residue stretch at 2–101 (TNRLVLSGTV…LHAEQIELID (100 aa)) folds into the SSB domain. A disulfide bridge links C48 with C80. The short motif at 82-89 (KAKNGLSK) is the L45 loop element.

This sequence belongs to the PriB family. Homodimer. Primosome assembly occurs via a 'hand-off' mechanism. PriA binds to replication forks, subsequently PriB then DnaT bind; DnaT then displaces ssDNA to generate the helicase loading substrate, which allows DnaC to load helicase DnaB onto the fork. ssDNA is displaced from the PriB-ssDNA complex by DnaT. In a PriA-PriB-replication fork structure, movement of the PriA CRR domain exposes a surface to which PriB binds and contacts ssDNA emerging from the PriA pore. Binds PriA; binding is improved in the presence of ssDNA. Weakly binds DnaT; binding is improved in the presence of ssDNA; as DnaT levels increase PriB dissociates from ssDNA. Component of the replication restart primosome, which is composed of PriA, PriB, PriC, DnaB and DnaT; DnaG primase associates transiently with this complex. Component of the preprimosomal complex composed of one monomer of PriC and DnaT, two monomers of PriA, two dimers of PriB and one hexamer of DnaB. An intersubunit disulfide bond is seen in some crystals.

Involved in the restart of stalled replication forks, which reloads the replicative helicase (DnaB) on sites other than the origin of replication; the PriA-PriB pathway is the major replication restart pathway. There are several restart pathways, the PriA-PriB pathway is subdivided into 2 distinct pathways. priB and priC have redundant roles in the cell. During primosome assembly it facilitates complex formation between PriA and DnaT on DNA; stabilizes PriA on DNA, presumably by preventing or inhibiting PriA DNA translocation activity. Forms a branched DNA-PriA-PriB complex when the lagging strand is single-stranded (ss)DNA. Binds ssDNA in the presence and absence of ssDNA DNA-binding protein (SSB), does not bind branched structures. DNA binding, forming spiral filaments on ssDNA, is cooperative. Stimulates the helicase activity of PriA. The homodimer binds 12 nucleotides of ssDNA. Binds homo-pyrimidine tracts better than homo-purine tracts. In terms of biological role, genetic interactions among priB, dam, lexA, nagC, polA, rdgB, rdgB, rep and uup link the PriA-PriB replication restart pathway to DNA double-strand break repair. The chain is Replication restart protein PriB from Escherichia coli (strain K12).